The sequence spans 232 residues: Phosphoribosylaminoimidazole-succinocarboxamide synthase (232 aa).

The protein belongs to the SAICAR synthetase family.

The catalysed reaction is 5-amino-1-(5-phospho-D-ribosyl)imidazole-4-carboxylate + L-aspartate + ATP = (2S)-2-[5-amino-1-(5-phospho-beta-D-ribosyl)imidazole-4-carboxamido]succinate + ADP + phosphate + 2 H(+). Its pathway is purine metabolism; IMP biosynthesis via de novo pathway; 5-amino-1-(5-phospho-D-ribosyl)imidazole-4-carboxamide from 5-amino-1-(5-phospho-D-ribosyl)imidazole-4-carboxylate: step 1/2. The protein is Phosphoribosylaminoimidazole-succinocarboxamide synthase of Finegoldia magna (strain ATCC 29328 / DSM 20472 / WAL 2508) (Peptostreptococcus magnus).